The chain runs to 250 residues: MAAGTSSYWEDLRKQARQLENELDLKLVSFSKLCTSYSHSSTRDGRRDRYSSDTTPLLNGSSQDRMFETMAIEIEQLLARLTGVNDKMAEYTNSAGVPSLNAALMHTLQRHRDILQDYTHEFHKTKANFMAIRERENLMGSVRKDIESYKSGSGVNNRRTELFLKEHDHLRNSDRLIEETISIAMATKENMTSQRGMLKSIHSKMNTLANRFPAVNSLIQRINLRKRRDSLILGGVIGICTILLLLYAFH.

Ala2 is modified (N-acetylalanine). Over 2-229 the chain is Cytoplasmic; that stretch reads AAGTSSYWED…QRINLRKRRD (228 aa). Residues 9 to 30 are a coiled coil; the sequence is WEDLRKQARQLENELDLKLVSF. Positions 38–59 are disordered; sequence SHSSTRDGRRDRYSSDTTPLLN. The segment covering 41-51 has biased composition (basic and acidic residues); it reads STRDGRRDRYS. A coiled-coil region spans residues 68 to 95; that stretch reads ETMAIEIEQLLARLTGVNDKMAEYTNSA. Residue Ser141 is modified to Phosphoserine. Residues 230 to 250 form a helical; Anchor for type IV membrane protein membrane-spanning segment; that stretch reads SLILGGVIGICTILLLLYAFH.

The protein belongs to the GOSR1 family. As to quaternary structure, component of several multiprotein Golgi SNARE complexes. Identified in a SNARE complex with BET1, STX5 and YKT6, in a SNARE complex with BET1L, STX5 and YKT6, in a SNARE complex with STX5, GOSR2, SEC22B and BET1, and in complex with STX5 and COG3. Interacts with GABARAPL2.

Its subcellular location is the golgi apparatus membrane. Functionally, involved in transport from the ER to the Golgi apparatus as well as in intra-Golgi transport. It belongs to a super-family of proteins called t-SNAREs or soluble NSF (N-ethylmaleimide-sensitive factor) attachment protein receptor. May play a protective role against hydrogen peroxide induced cytotoxicity under glutathione depleted conditions in neuronal cells by regulating the intracellular ROS levels via inhibition of p38 MAPK (MAPK11, MAPK12, MAPK13 and MAPK14). Participates in docking and fusion stage of ER to cis-Golgi transport. Plays an important physiological role in VLDL-transport vesicle-Golgi fusion and thus in VLDL delivery to the hepatic cis-Golgi. The chain is Golgi SNAP receptor complex member 1 (GOSR1) from Homo sapiens (Human).